Consider the following 166-residue polypeptide: Endoribonuclease YbeY (166 aa).

Residues His129, His133, and His139 each coordinate Zn(2+).

The protein belongs to the endoribonuclease YbeY family. The cofactor is Zn(2+).

The protein localises to the cytoplasm. Functionally, single strand-specific metallo-endoribonuclease involved in late-stage 70S ribosome quality control and in maturation of the 3' terminus of the 16S rRNA. This is Endoribonuclease YbeY from Mesorhizobium japonicum (strain LMG 29417 / CECT 9101 / MAFF 303099) (Mesorhizobium loti (strain MAFF 303099)).